Here is a 340-residue protein sequence, read N- to C-terminus: Uroporphyrinogen decarboxylase (340 aa).

Residues 21 to 25 (RQAGR), F40, D71, Y148, S203, and H316 contribute to the substrate site.

Belongs to the uroporphyrinogen decarboxylase family. Homodimer.

The protein resides in the cytoplasm. It carries out the reaction uroporphyrinogen III + 4 H(+) = coproporphyrinogen III + 4 CO2. It functions in the pathway porphyrin-containing compound metabolism; protoporphyrin-IX biosynthesis; coproporphyrinogen-III from 5-aminolevulinate: step 4/4. Its function is as follows. Catalyzes the decarboxylation of four acetate groups of uroporphyrinogen-III to yield coproporphyrinogen-III. This is Uroporphyrinogen decarboxylase from Campylobacter jejuni subsp. jejuni serotype O:2 (strain ATCC 700819 / NCTC 11168).